The primary structure comprises 430 residues: Enolase (430 aa).

Position 163 (glutamine 163) interacts with (2R)-2-phosphoglycerate. Residue glutamate 205 is the Proton donor of the active site. Mg(2+) contacts are provided by aspartate 242, glutamate 286, and aspartate 313. (2R)-2-phosphoglycerate-binding residues include lysine 338, arginine 367, serine 368, and lysine 389. Residue lysine 338 is the Proton acceptor of the active site.

The protein belongs to the enolase family. It depends on Mg(2+) as a cofactor.

It is found in the cytoplasm. The protein resides in the secreted. It localises to the cell surface. The catalysed reaction is (2R)-2-phosphoglycerate = phosphoenolpyruvate + H2O. The protein operates within carbohydrate degradation; glycolysis; pyruvate from D-glyceraldehyde 3-phosphate: step 4/5. Its function is as follows. Catalyzes the reversible conversion of 2-phosphoglycerate (2-PG) into phosphoenolpyruvate (PEP). It is essential for the degradation of carbohydrates via glycolysis. In Symbiobacterium thermophilum (strain DSM 24528 / JCM 14929 / IAM 14863 / T), this protein is Enolase.